The chain runs to 325 residues: GMP reductase (325 aa).

Catalysis depends on cysteine 174, which acts as the Thioimidate intermediate. 203–226 (LIADGGIRTHGDIAKSIRFGATMV) serves as a coordination point for NADP(+).

Belongs to the IMPDH/GMPR family. GuaC type 2 subfamily.

The catalysed reaction is IMP + NH4(+) + NADP(+) = GMP + NADPH + 2 H(+). Functionally, catalyzes the irreversible NADPH-dependent deamination of GMP to IMP. It functions in the conversion of nucleobase, nucleoside and nucleotide derivatives of G to A nucleotides, and in maintaining the intracellular balance of A and G nucleotides. The sequence is that of GMP reductase from Pediococcus pentosaceus (strain ATCC 25745 / CCUG 21536 / LMG 10740 / 183-1w).